A 118-amino-acid polypeptide reads, in one-letter code: Large ribosomal subunit protein bL19 (118 aa).

Belongs to the bacterial ribosomal protein bL19 family.

Functionally, this protein is located at the 30S-50S ribosomal subunit interface and may play a role in the structure and function of the aminoacyl-tRNA binding site. This Campylobacter curvus (strain 525.92) protein is Large ribosomal subunit protein bL19.